An 83-amino-acid polypeptide reads, in one-letter code: Evasin P1090 (83 aa).

The first 24 residues, 1–24 (MEVKIFAFLQIAVLIAFSLHLASA), serve as a signal peptide directing secretion. Disulfide bonds link Cys44–Cys63, Cys48–Cys65, and Cys59–Cys76. N-linked (GlcNAc...) asparagine glycosylation is present at Asn47. An N-linked (GlcNAc...) asparagine glycan is attached at Asn70.

It is found in the secreted. Functionally, salivary chemokine-binding protein which binds to host chemokines CXCL1, CXCL2, CXCL3, CXCL5, CXCL6, CXCL10, CXCL11 and CXCL13. This is Evasin P1090 from Ixodes ricinus (Common tick).